Consider the following 346-residue polypeptide: Lysyl aminopeptidase (346 aa).

H63 and D177 together coordinate Zn(2+). E207 (proton acceptor) is an active-site residue. Zn(2+) is bound by residues E208, D230, and H314.

As to quaternary structure, homotetramer. Zn(2+) is required as a cofactor.

The catalysed reaction is Preferentially, release of N-terminal lysine.. Hydrolyzes di-, tri- and tetrapeptides with a lysine as the N-terminal amino acid and with Gly, Lys, Ala, Phe or Glu in the second position. In Pyrococcus furiosus (strain ATCC 43587 / DSM 3638 / JCM 8422 / Vc1), this protein is Lysyl aminopeptidase.